The chain runs to 276 residues: Extracellular metalloprotease 1 (276 aa).

A signal peptide spans 1-18 (MRVSVPVLALAFGSLAAA). Residue His-191 participates in Zn(2+) binding. The active site involves Glu-192. Position 195 (His-195) interacts with Zn(2+). The segment at 211-233 (GDYVSDTPPQRSPSSGCPVGRDS) is disordered. The cysteines at positions 227 and 253 are disulfide-linked.

This sequence belongs to the peptidase M43B family.

Its subcellular location is the secreted. In terms of biological role, secreted metalloproteinase that allows assimilation of proteinaceous substrates. Pays a pivotal role as a pathogenicity determinant during infections and contributes to the ability of the pathogen to persist within the mammalian host. Digests an immunodominant cell surface antigen (SOWgp) and prevents host recognition of endospores during the phase of development when these fungal cells are most vulnerable to phagocytic cell defenses. The protein is Extracellular metalloprotease 1 (MEP1) of Coccidioides posadasii (strain C735) (Valley fever fungus).